We begin with the raw amino-acid sequence, 152 residues long: SsrA-binding protein (152 aa).

A disordered region spans residues H130–R152. Positions K132–R152 are enriched in basic and acidic residues.

The protein belongs to the SmpB family.

The protein resides in the cytoplasm. In terms of biological role, required for rescue of stalled ribosomes mediated by trans-translation. Binds to transfer-messenger RNA (tmRNA), required for stable association of tmRNA with ribosomes. tmRNA and SmpB together mimic tRNA shape, replacing the anticodon stem-loop with SmpB. tmRNA is encoded by the ssrA gene; the 2 termini fold to resemble tRNA(Ala) and it encodes a 'tag peptide', a short internal open reading frame. During trans-translation Ala-aminoacylated tmRNA acts like a tRNA, entering the A-site of stalled ribosomes, displacing the stalled mRNA. The ribosome then switches to translate the ORF on the tmRNA; the nascent peptide is terminated with the 'tag peptide' encoded by the tmRNA and targeted for degradation. The ribosome is freed to recommence translation, which seems to be the essential function of trans-translation. The chain is SsrA-binding protein from Thermosynechococcus vestitus (strain NIES-2133 / IAM M-273 / BP-1).